A 666-amino-acid chain; its full sequence is DNA mismatch repair protein MutL (666 aa).

It belongs to the DNA mismatch repair MutL/HexB family.

In terms of biological role, this protein is involved in the repair of mismatches in DNA. It is required for dam-dependent methyl-directed DNA mismatch repair. May act as a 'molecular matchmaker', a protein that promotes the formation of a stable complex between two or more DNA-binding proteins in an ATP-dependent manner without itself being part of a final effector complex. This chain is DNA mismatch repair protein MutL, found in Clostridium botulinum (strain Langeland / NCTC 10281 / Type F).